The sequence spans 405 residues: L-carnitine CoA-transferase (405 aa).

2 residues coordinate CoA: K97 and R104. The active-site Nucleophile is D169.

This sequence belongs to the CoA-transferase III family. CaiB subfamily. Homodimer.

The protein localises to the cytoplasm. The catalysed reaction is crotonobetainyl-CoA + (R)-carnitine = crotonobetaine + (R)-carnitinyl-CoA. It catalyses the reaction 4-(trimethylamino)butanoyl-CoA + (R)-carnitine = (R)-carnitinyl-CoA + 4-(trimethylamino)butanoate. The protein operates within amine and polyamine metabolism; carnitine metabolism. In terms of biological role, catalyzes the reversible transfer of the CoA moiety from gamma-butyrobetainyl-CoA to L-carnitine to generate L-carnitinyl-CoA and gamma-butyrobetaine. Is also able to catalyze the reversible transfer of the CoA moiety from gamma-butyrobetainyl-CoA or L-carnitinyl-CoA to crotonobetaine to generate crotonobetainyl-CoA. The polypeptide is L-carnitine CoA-transferase (Escherichia coli O6:K15:H31 (strain 536 / UPEC)).